A 396-amino-acid polypeptide reads, in one-letter code: FAD-dependent monooxygenase phomE' (396 aa).

E3 contributes to the FAD binding site. Residues R158 and Y196 contribute to the active site. D277 and G290 together coordinate FAD.

The protein belongs to the paxM FAD-dependent monooxygenase family. Monomer. The cofactor is FAD.

Functionally, FAD-dependent monooxygenase; part of the gene cluster that mediates the biosynthesis of the phomopsins, a group of hexapeptide mycotoxins which infects lupins and causes lupinosis disease in livestock. The role of phomE' within the phomopsins biosynthesis pathway has still to be determined. The pathway starts with the processing of the precursor phomA by several endopeptidases including kexin proteases as well as the cluster-specific S41 family peptidase phomP1 and the oligopeptidase phomG to produce 10 identical copies of the hexapeptide Tyr-Val-Ile-Pro-Ile-Asp. After being excised from the precursor peptide, the core peptides are cyclized and modified post-translationally by enzymes encoded within the gene cluster. The timing and order of proteolysis of the phomA precursor and PTMs are still unknown. Two tyrosinase-like enzymes, phomQ1 and phomQ2, catalyze the chlorination and hydroxylation of Tyr, respectively. PhomYb, is proposed to be involved in the construction of the macrocyclic structure. The other 4 ustYa family proteins may be involved in PTMs that generate the unique structure of phomopsin A. PhomYa is required for the hydroxylation of C-beta of Tyr. PhomYc, phomYd, and phomYe are responsible for the biosynthesis of 2,3-dehydroisoleucine (dIle), 2,3-dehydroaspartic acid (dAsp), and 3,4-dehydroproline (dPro), respectively. While dIle formation by phomYc is indispensable for the installation of dAsp by phomYd, the order of the other PTMs have not been elucidated yet. Most of the biosynthetic enzymes likely have broad substrate specificity, and thus, there might be a metabolic grid from a precursor to phomopsin A. The enzyme(s) responsible for the biosynthesis of 3,4-dehydrovaline (dVal) have also not been identified yet. Finally, phomM acts as an S-adenosylmethionine-dependent alpha-N-methyltransferase that catalyzes two successive N-methylation reactions, converting N-desmethyl-phomopsin A to phomopsin A and phomopsin A further to an N,N-dimethylated congener called phomopsin E. This chain is FAD-dependent monooxygenase phomE', found in Diaporthe leptostromiformis (Lupinosis disease fungus).